Here is a 376-residue protein sequence, read N- to C-terminus: Cellular tumor antigen p53 (376 aa).

Positions 1-36 (MEGNGERDTMMVEPPDSQEFAELWLRNLIVRDNSLW) are transcription activation (acidic). A DNA-binding region spans residues 77–268 (DYPGLLNFTL…KTEESNFKKQ (192 aa)). The span at 150-159 (RCPHHERSND) shows a compositional bias: basic and acidic residues. Residues 150–171 (RCPHHERSNDSSDGPAPPGHLL) form a disordered region. Zn(2+) contacts are provided by cysteine 151, histidine 154, cysteine 214, and cysteine 218. The interval 249–256 (RVCACPGR) is interaction with DNA. Composition is skewed to basic and acidic residues over residues 257–270 (DRKT…KQQE) and 282–294 (SMKD…EASK). Residues 257–306 (DRKTEESNFKKQQEPKTSGKTLTKRSMKDPPSHPEASKKSKNSSSDDEIY) are disordered. The Bipartite nuclear localization signal motif lies at 280–297 (KRSMKDPPSHPEASKKSK). Residues 303-334 (DEIYTLQVRGKERYEFLKKINDGLELSDVVPP) are oligomerization. Residues 317 to 328 (EFLKKINDGLEL) carry the Nuclear export signal motif. A disordered region spans residues 342 to 376 (QKLLSKTCRKERDGAAGEPKRGKKRLVKEEKCDSD). The interval 347–372 (KTCRKERDGAAGEPKRGKKRLVKEEK) is basic (repression of DNA-binding). The segment covering 349–361 (CRKERDGAAGEPK) has biased composition (basic and acidic residues).

The protein belongs to the p53 family. As to quaternary structure, binds DNA as a homotetramer. Zn(2+) is required as a cofactor.

It localises to the cytoplasm. Its subcellular location is the nucleus. Functionally, multifunctional transcription factor that induces cell cycle arrest, DNA repair or apoptosis upon binding to its target DNA sequence. Acts as a tumor suppressor in many tumor types; induces growth arrest or apoptosis depending on the physiological circumstances and cell type. Negatively regulates cell division by controlling expression of a set of genes required for this process. One of the activated genes is an inhibitor of cyclin-dependent kinases. Apoptosis induction seems to be mediated either by stimulation of BAX and FAS antigen expression, or by repression of Bcl-2 expression. The sequence is that of Cellular tumor antigen p53 (tp53) from Ictalurus punctatus (Channel catfish).